The primary structure comprises 297 residues: Inactive beta selinene synthase (297 aa).

The protein belongs to the terpene synthase family. As to quaternary structure, monomer.

The protein resides in the cytoplasm. Its function is as follows. Inactive selinene synthase. This is Inactive beta selinene synthase from Zea mays (Maize).